Consider the following 335-residue polypeptide: NAC domain-containing protein 40 (335 aa).

In terms of domain architecture, NAC spans 14 to 156 (LFPGFRFSPT…ALVVCRLRKN (143 aa)). A DNA-binding region spans residues 112 to 162 (VGTKRTLVFHIGRAPRGERTEWIMHEYCIHGAPQDALVVCRLRKNADFRAS). Residues 245–254 (PTNPTHQETI) are compositionally biased toward polar residues. Positions 245-267 (PTNPTHQETISSESSSKRSKCGI) are disordered. The helical transmembrane segment at 313 to 333 (VLATTVFLAILFSFFWTVLIA) threads the bilayer.

Proteolytically cleaved, probably by metalloprotease activity. This cleavage mediates a translocation from the plasma membrane to the nucleus. As to expression, expressed in seeds, leaves, roots and inflorescence. Expressed in roots, rosette leaves, cauline leaves, shoot apex, stems and flowers.

The protein resides in the cell membrane. It is found in the nucleus. Transcriptional activator activated by proteolytic cleavage through regulated intramembrane proteolysis (RIP), probably via metalloprotease activity. Regulates gibberellic acid-mediated salt-responsive repression of seed germination and flowering via FT, thus delaying seed germination under high salinity conditions. This chain is NAC domain-containing protein 40, found in Arabidopsis thaliana (Mouse-ear cress).